Reading from the N-terminus, the 166-residue chain is Putative tRNA (cytidine(34)-2'-O)-methyltransferase (166 aa).

S-adenosyl-L-methionine is bound by residues leucine 83, glycine 109, isoleucine 130, and serine 138.

This sequence belongs to the class IV-like SAM-binding methyltransferase superfamily. RNA methyltransferase TrmH family. TrmL subfamily.

The protein resides in the cytoplasm. The enzyme catalyses cytidine(34) in tRNA + S-adenosyl-L-methionine = 2'-O-methylcytidine(34) in tRNA + S-adenosyl-L-homocysteine + H(+). It catalyses the reaction 5-carboxymethylaminomethyluridine(34) in tRNA(Leu) + S-adenosyl-L-methionine = 5-carboxymethylaminomethyl-2'-O-methyluridine(34) in tRNA(Leu) + S-adenosyl-L-homocysteine + H(+). Functionally, could methylate the ribose at the nucleotide 34 wobble position in tRNA. The protein is Putative tRNA (cytidine(34)-2'-O)-methyltransferase of Mycoplasma pneumoniae (strain ATCC 29342 / M129 / Subtype 1) (Mycoplasmoides pneumoniae).